Consider the following 99-residue polypeptide: Nucleoid-associated protein UPA3_0088 (99 aa).

This sequence belongs to the YbaB/EbfC family. In terms of assembly, homodimer.

The protein localises to the cytoplasm. The protein resides in the nucleoid. In terms of biological role, binds to DNA and alters its conformation. May be involved in regulation of gene expression, nucleoid organization and DNA protection. The protein is Nucleoid-associated protein UPA3_0088 of Ureaplasma parvum serovar 3 (strain ATCC 27815 / 27 / NCTC 11736).